Here is a 307-residue protein sequence, read N- to C-terminus: MDHFLKLLPKLTPQLRKGDCGKIAVIGGSLEYTGAPYYAASSVSRLGADLIHVFCAPDAAPVIKGYSPDLIVHPGMNASSILPKLNRMDAIVVGPGLGRNPTLWPLLQEIFNFVKNEKVPFVIDGDGLWFVSEHIEHFPRQMVTTVLTPNIVEFSRLCKSALGEEDVLNVKSSSQLQHLAAELSRKMDVTIYMKGEVDLVVTPNGEVSKCSTDSSLRRCGGQGDVTAGSLGLFLYWAKKNLGDDWTSAHHEAGISSSWLVRTAGRRAFEKHGRSMNTPLLLDEIPKLVRDVETREMKDTVHSDSSKH.

In terms of domain architecture, YjeF C-terminal spans 1 to 291; that stretch reads MDHFLKLLPK…DEIPKLVRDV (291 aa). (6S)-NADPHX-binding positions include Gly96 and 150–156; that span reads NIVEFSR. Residues 194–198 and 214–223 contribute to the ATP site; these read KGEVD and SSLRRCGGQG. Residue Asp224 participates in (6S)-NADPHX binding.

This sequence belongs to the NnrD/CARKD family. Mg(2+) is required as a cofactor.

It catalyses the reaction (6S)-NADHX + ATP = ADP + phosphate + NADH + H(+). It carries out the reaction (6S)-NADPHX + ATP = ADP + phosphate + NADPH + H(+). Functionally, catalyzes the dehydration of the S-form of NAD(P)HX at the expense of ATP, which is converted to ADP. Together with NAD(P)HX epimerase, which catalyzes the epimerization of the S- and R-forms, the enzyme allows the repair of both epimers of NAD(P)HX, a damaged form of NAD(P)H that is a result of enzymatic or heat-dependent hydration. In Caenorhabditis briggsae, this protein is ATP-dependent (S)-NAD(P)H-hydrate dehydratase.